A 139-amino-acid chain; its full sequence is Actin-depolymerizing factor 6 (139 aa).

The 135-residue stretch at 5–139 folds into the ADF-H domain; it reads ASGMAVGDEC…SMDIVKARAL (135 aa).

It belongs to the actin-binding proteins ADF family.

Functionally, actin-depolymerizing protein. Severs actin filaments (F-actin) and binds to actin monomers. This Oryza sativa subsp. japonica (Rice) protein is Actin-depolymerizing factor 6 (ADF6).